A 362-amino-acid polypeptide reads, in one-letter code: Peptide chain release factor 1 (362 aa).

Gln-235 is modified (N5-methylglutamine).

The protein belongs to the prokaryotic/mitochondrial release factor family. Post-translationally, methylated by PrmC. Methylation increases the termination efficiency of RF1.

Its subcellular location is the cytoplasm. Peptide chain release factor 1 directs the termination of translation in response to the peptide chain termination codons UAG and UAA. The sequence is that of Peptide chain release factor 1 from Variovorax paradoxus (strain S110).